A 68-amino-acid polypeptide reads, in one-letter code: Large ribosomal subunit protein uL29 (68 aa).

Belongs to the universal ribosomal protein uL29 family.

This Streptococcus sanguinis (strain SK36) protein is Large ribosomal subunit protein uL29.